A 635-amino-acid polypeptide reads, in one-letter code: Threonine--tRNA ligase (635 aa).

The region spanning 1-61 (MISIRLKDGS…KEDGCLELLD (61 aa)) is the TGS domain. A catalytic region spans residues 242-532 (DHRRLGRELG…LTEHFGGAFP (291 aa)). 3 residues coordinate Zn(2+): C333, H384, and H509.

The protein belongs to the class-II aminoacyl-tRNA synthetase family. Homodimer. The cofactor is Zn(2+).

The protein resides in the cytoplasm. It catalyses the reaction tRNA(Thr) + L-threonine + ATP = L-threonyl-tRNA(Thr) + AMP + diphosphate + H(+). Catalyzes the attachment of threonine to tRNA(Thr) in a two-step reaction: L-threonine is first activated by ATP to form Thr-AMP and then transferred to the acceptor end of tRNA(Thr). Also edits incorrectly charged L-seryl-tRNA(Thr). The protein is Threonine--tRNA ligase of Syntrophomonas wolfei subsp. wolfei (strain DSM 2245B / Goettingen).